The chain runs to 261 residues: MNTFFKLGSLIQRTASQISSSFPKSRFFSDGESAVYHHARLFKKPLSTKLKFNLVNSVSLMGFVDRSIQVMNTGPDRFGVFTILRVKDPLNPNRSFRISLRMWDAMARTCIAHLKLNDHILVSGRLESYSKSSSDVYSGLNLDYQVKVAEVNYVAAPPSHVLDSQISKNPKTKTEDDIEESKKDEIYLWQVFFSNPYDWWDNRRNKKNPKQPDFKHKDTGEALWLCSDLPDWITRRLELFDQKNRFYDEEKTRRDRLSDYI.

The N-terminal 28 residues, 1 to 28 (MNTFFKLGSLIQRTASQISSSFPKSRFF), are a transit peptide targeting the mitochondrion. The SSB domain occupies 55–155 (VNSVSLMGFV…VKVAEVNYVA (101 aa)). Residues 189 to 238 (WQVFFSNPYDWWDNRRNKKNPKQPDFKHKDTGEALWLCSDLPDWITRRLE) are PDF region.

As to expression, expressed in root elongation zone and in gametophytic cells.

The protein localises to the mitochondrion. Its function is as follows. Regulates mitochondrial DNA recombination. Represses homologous recombination, preventing mitochondrial genome instability and unbalanced transmission of alternative mtDNA configurations. Binds preferentially single-stranded DNA. Does not bind to RNA. This Arabidopsis thaliana (Mouse-ear cress) protein is Protein OSB1, mitochondrial (OSB1).